A 68-amino-acid polypeptide reads, in one-letter code: Protein transport protein Sec61 subunit gamma (68 aa).

The Cytoplasmic segment spans residues methionine 1–glutamate 32. A helical transmembrane segment spans residues phenylalanine 33–isoleucine 61. Residues asparagine 62 to serine 68 lie on the Extracellular side of the membrane.

The protein belongs to the SecE/SEC61-gamma family. In terms of assembly, heterotrimeric complex composed of SEC61-alpha, SEC61-beta and SEC61-gamma.

It localises to the endoplasmic reticulum membrane. Functionally, necessary for protein translocation in the endoplasmic reticulum. This is Protein transport protein Sec61 subunit gamma (SEC61G) from Gryllotalpa orientalis (Oriental mole cricket).